Reading from the N-terminus, the 363-residue chain is Ribosome-binding ATPase YchF (363 aa).

The region spanning 3–256 (FKCGIVGLPN…LDDEERDEFM (254 aa)) is the OBG-type G domain. 12–17 (NVGKST) is an ATP binding site. 2 residues coordinate Mg(2+): S16 and T36. A TGS domain is found at 278–361 (NLQTYFTAGV…KDGDVMNFLF (84 aa)).

The protein belongs to the TRAFAC class OBG-HflX-like GTPase superfamily. OBG GTPase family. YchF/OLA1 subfamily. Mg(2+) is required as a cofactor.

Its function is as follows. ATPase that binds to both the 70S ribosome and the 50S ribosomal subunit in a nucleotide-independent manner. In Escherichia coli O157:H7, this protein is Ribosome-binding ATPase YchF.